The primary structure comprises 319 residues: Tetrahydromethanopterin S-methyltransferase subunit H (319 aa).

The protein belongs to the MtrH family. In terms of assembly, the complex is composed of 8 subunits; MtrA, MtrB, MtrC, MtrD, MtrE, MtrF, MtrG and MtrH.

The catalysed reaction is 5-methyl-5,6,7,8-tetrahydromethanopterin + coenzyme M + 2 Na(+)(in) = 5,6,7,8-tetrahydromethanopterin + methyl-coenzyme M + 2 Na(+)(out). It participates in one-carbon metabolism; methanogenesis from CO(2); methyl-coenzyme M from 5,10-methylene-5,6,7,8-tetrahydromethanopterin: step 2/2. Its function is as follows. Part of a complex that catalyzes the formation of methyl-coenzyme M and tetrahydromethanopterin from coenzyme M and methyl-tetrahydromethanopterin. This is an energy-conserving, sodium-ion translocating step. MtrH catalyzes the transfer of the methyl group from methyl-tetrahydromethanopterin to the corrinoid prosthetic group of MtrA. This chain is Tetrahydromethanopterin S-methyltransferase subunit H, found in Methanococcus aeolicus (strain ATCC BAA-1280 / DSM 17508 / OCM 812 / Nankai-3).